Here is a 313-residue protein sequence, read N- to C-terminus: Porphobilinogen deaminase (313 aa).

At Cys242 the chain carries S-(dipyrrolylmethanemethyl)cysteine.

It belongs to the HMBS family. As to quaternary structure, monomer. Dipyrromethane is required as a cofactor.

The enzyme catalyses 4 porphobilinogen + H2O = hydroxymethylbilane + 4 NH4(+). The protein operates within porphyrin-containing compound metabolism; protoporphyrin-IX biosynthesis; coproporphyrinogen-III from 5-aminolevulinate: step 2/4. In terms of biological role, tetrapolymerization of the monopyrrole PBG into the hydroxymethylbilane pre-uroporphyrinogen in several discrete steps. In Yersinia pestis bv. Antiqua (strain Angola), this protein is Porphobilinogen deaminase.